Consider the following 197-residue polypeptide: dITP/XTP pyrophosphatase (197 aa).

8 to 13 (TGNPGK) provides a ligand contact to substrate. 2 residues coordinate Mg(2+): E40 and D69. D69 functions as the Proton acceptor in the catalytic mechanism. Residues S70, 154-157 (FGYD), K177, and 182-183 (HR) each bind substrate.

The protein belongs to the HAM1 NTPase family. Homodimer. Mg(2+) serves as cofactor.

It carries out the reaction XTP + H2O = XMP + diphosphate + H(+). The catalysed reaction is dITP + H2O = dIMP + diphosphate + H(+). It catalyses the reaction ITP + H2O = IMP + diphosphate + H(+). Pyrophosphatase that catalyzes the hydrolysis of nucleoside triphosphates to their monophosphate derivatives, with a high preference for the non-canonical purine nucleotides XTP (xanthosine triphosphate), dITP (deoxyinosine triphosphate) and ITP. Seems to function as a house-cleaning enzyme that removes non-canonical purine nucleotides from the nucleotide pool, thus preventing their incorporation into DNA/RNA and avoiding chromosomal lesions. In Pectobacterium atrosepticum (strain SCRI 1043 / ATCC BAA-672) (Erwinia carotovora subsp. atroseptica), this protein is dITP/XTP pyrophosphatase.